The chain runs to 663 residues: Transketolase 1 (663 aa).

H26 contributes to the substrate binding site. K46 carries the post-translational modification N6-acetyllysine. Residues H66 and 114–116 contribute to the thiamine diphosphate site; that span reads GPL. D155 contacts Mg(2+). Residues G156 and N185 each coordinate thiamine diphosphate. Residues N185 and I187 each coordinate Mg(2+). Residues H261, R358, and S385 each coordinate substrate. Thiamine diphosphate is bound at residue H261. Residue E411 is the Proton donor of the active site. Thiamine diphosphate is bound at residue F437. Residues H461, D469, H473, and R520 each contribute to the substrate site.

This sequence belongs to the transketolase family. Homodimer. The cofactor is Mg(2+). Requires Ca(2+) as cofactor. It depends on Mn(2+) as a cofactor. Co(2+) is required as a cofactor. Thiamine diphosphate serves as cofactor.

The catalysed reaction is D-sedoheptulose 7-phosphate + D-glyceraldehyde 3-phosphate = aldehydo-D-ribose 5-phosphate + D-xylulose 5-phosphate. In terms of biological role, catalyzes the transfer of a two-carbon ketol group from a ketose donor to an aldose acceptor, via a covalent intermediate with the cofactor thiamine pyrophosphate. Thus, catalyzes the reversible transfer of a two-carbon ketol group from sedoheptulose-7-phosphate to glyceraldehyde-3-phosphate, producing xylulose-5-phosphate and ribose-5-phosphate. The chain is Transketolase 1 (tktA) from Escherichia coli (strain K12).